We begin with the raw amino-acid sequence, 489 residues long: Glutamate--tRNA ligase (489 aa).

A 'HIGH' region motif is present at residues 11-21 (PSPTGHLHIGG). The 'KMSKS' region motif lies at 253 to 257 (KLSKR). ATP is bound at residue Lys256.

It belongs to the class-I aminoacyl-tRNA synthetase family. Glutamate--tRNA ligase type 1 subfamily. In terms of assembly, monomer.

The protein resides in the cytoplasm. It catalyses the reaction tRNA(Glu) + L-glutamate + ATP = L-glutamyl-tRNA(Glu) + AMP + diphosphate. Its function is as follows. Catalyzes the attachment of glutamate to tRNA(Glu) in a two-step reaction: glutamate is first activated by ATP to form Glu-AMP and then transferred to the acceptor end of tRNA(Glu). This chain is Glutamate--tRNA ligase, found in Geobacillus stearothermophilus (Bacillus stearothermophilus).